A 740-amino-acid polypeptide reads, in one-letter code: 1,4-alpha-glucan branching enzyme GlgB (740 aa).

Asp419 serves as the catalytic Nucleophile. Glu472 functions as the Proton donor in the catalytic mechanism.

It belongs to the glycosyl hydrolase 13 family. GlgB subfamily. In terms of assembly, monomer.

It catalyses the reaction Transfers a segment of a (1-&gt;4)-alpha-D-glucan chain to a primary hydroxy group in a similar glucan chain.. It participates in glycan biosynthesis; glycogen biosynthesis. In terms of biological role, catalyzes the formation of the alpha-1,6-glucosidic linkages in glycogen by scission of a 1,4-alpha-linked oligosaccharide from growing alpha-1,4-glucan chains and the subsequent attachment of the oligosaccharide to the alpha-1,6 position. The polypeptide is 1,4-alpha-glucan branching enzyme GlgB (Thiobacillus denitrificans (strain ATCC 25259 / T1)).